Consider the following 22-residue polypeptide: Peptide PGLa-R1 (22 aa).

At L22 the chain carries Leucine amide.

In terms of tissue distribution, expressed by the skin glands.

It localises to the secreted. Antimicrobial peptide. The polypeptide is Peptide PGLa-R1 (Xenopus ruwenzoriensis (Uganda clawed frog)).